Here is a 403-residue protein sequence, read N- to C-terminus: Flavohemoprotein (403 aa).

In terms of domain architecture, Globin spans 1 to 138 (MLTQKTKDIV…LADILAGMES (138 aa)). H85 contributes to the heme b binding site. Residues Y95 and E137 each act as charge relay system in the active site. The reductase stretch occupies residues 149-403 (GGWAGWRRFI…EVFGPDLFAE (255 aa)). The FAD-binding FR-type domain occupies 152-262 (AGWRRFIVRE…AAPYGNFYID (111 aa)). Residues Y190 and 206-209 (RQYS) each bind FAD. An NADP(+)-binding site is contributed by 275–280 (GVGLTP). Residue 395-398 (VFGP) participates in FAD binding.

The protein belongs to the globin family. Two-domain flavohemoproteins subfamily. It in the C-terminal section; belongs to the flavoprotein pyridine nucleotide cytochrome reductase family. Heme b is required as a cofactor. FAD serves as cofactor.

It catalyses the reaction 2 nitric oxide + NADPH + 2 O2 = 2 nitrate + NADP(+) + H(+). The enzyme catalyses 2 nitric oxide + NADH + 2 O2 = 2 nitrate + NAD(+) + H(+). Is involved in NO detoxification in an aerobic process, termed nitric oxide dioxygenase (NOD) reaction that utilizes O(2) and NAD(P)H to convert NO to nitrate, which protects the bacterium from various noxious nitrogen compounds. Therefore, plays a central role in the inducible response to nitrosative stress. In Rhizobium meliloti (strain 1021) (Ensifer meliloti), this protein is Flavohemoprotein.